The following is a 290-amino-acid chain: Proteasome subunit beta (290 aa).

Residues 1–58 constitute a propeptide, removed in mature form; by autocatalysis; the sequence is MTTSGGLTGPGAFGRLPQPFHQPGITSFVEFLALQAPDLLPGRLQMPAGGQPPEVPHG. Catalysis depends on Thr59, which acts as the Nucleophile.

Belongs to the peptidase T1B family. In terms of assembly, the 20S proteasome core is composed of 14 alpha and 14 beta subunits that assemble into four stacked heptameric rings, resulting in a barrel-shaped structure. The two inner rings, each composed of seven catalytic beta subunits, are sandwiched by two outer rings, each composed of seven alpha subunits. The catalytic chamber with the active sites is on the inside of the barrel. Has a gated structure, the ends of the cylinder being occluded by the N-termini of the alpha-subunits. Is capped by the proteasome-associated ATPase, ARC.

The protein resides in the cytoplasm. The enzyme catalyses Cleavage of peptide bonds with very broad specificity.. It participates in protein degradation; proteasomal Pup-dependent pathway. Its activity is regulated as follows. The formation of the proteasomal ATPase ARC-20S proteasome complex, likely via the docking of the C-termini of ARC into the intersubunit pockets in the alpha-rings, may trigger opening of the gate for substrate entry. Interconversion between the open-gate and close-gate conformations leads to a dynamic regulation of the 20S proteasome proteolysis activity. Its function is as follows. Component of the proteasome core, a large protease complex with broad specificity involved in protein degradation. The chain is Proteasome subunit beta from Acidothermus cellulolyticus (strain ATCC 43068 / DSM 8971 / 11B).